Here is a 195-residue protein sequence, read N- to C-terminus: MILSDQDILARLADGDLAIEPLEDVDLQVQPASVDVRLGRRFLEFERANVPCIHPNREDEVDEYVTETVVEDGDEFILHPGDFVLGTTKERVEVPRDLVAQVEGRSSLGRLAVVVHATAGFIDPGFNGRVTLELSNLGKVPVALTPEMRISQLVFTELTSPADRPYGDERGSKYQDQDGPQASRIRGDREFGGTQ.

DCTP-binding positions include 105–110 (RSSLGR), Asp123, 131–133 (TLE), Gln152, Tyr166, Lys173, and Gln177. Glu133 serves as the catalytic Proton donor/acceptor. The segment at 161–195 (PADRPYGDERGSKYQDQDGPQASRIRGDREFGGTQ) is disordered. Over residues 165-176 (PYGDERGSKYQD) the composition is skewed to basic and acidic residues. Residues 185–195 (IRGDREFGGTQ) are compositionally biased toward basic and acidic residues.

The protein belongs to the dCTP deaminase family. As to quaternary structure, homotrimer.

The enzyme catalyses dCTP + 2 H2O = dUMP + NH4(+) + diphosphate. It functions in the pathway pyrimidine metabolism; dUMP biosynthesis; dUMP from dCTP: step 1/1. Its function is as follows. Bifunctional enzyme that catalyzes both the deamination of dCTP to dUTP and the hydrolysis of dUTP to dUMP without releasing the toxic dUTP intermediate. In Halobacterium salinarum (strain ATCC 700922 / JCM 11081 / NRC-1) (Halobacterium halobium), this protein is dCTP deaminase, dUMP-forming.